A 78-amino-acid polypeptide reads, in one-letter code: DNA-directed RNA polymerase subunit omega (78 aa).

This sequence belongs to the RNA polymerase subunit omega family. As to quaternary structure, in cyanobacteria the RNAP catalytic core is composed of 2 alpha, 1 beta, 1 beta', 1 gamma and 1 omega subunit. When a sigma factor is associated with the core the holoenzyme is formed, which can initiate transcription.

It carries out the reaction RNA(n) + a ribonucleoside 5'-triphosphate = RNA(n+1) + diphosphate. Functionally, promotes RNA polymerase assembly. Latches the N- and C-terminal regions of the beta' subunit thereby facilitating its interaction with the beta and alpha subunits. This chain is DNA-directed RNA polymerase subunit omega, found in Prochlorococcus marinus (strain MIT 9312).